A 100-amino-acid chain; its full sequence is Elevenin-Vc1 (100 aa).

Residues 1-24 (MAPSQKALLVLVLSMLLTASDSWA) form the signal peptide. Residues Cys29 and Cys38 are joined by a disulfide bond. Positions 44 to 100 (KRGGDSLSVGGSAELDDALTDPFLRSEEPREWRELTRLSRVLQTFLSHPTGETEQHD) are excised as a propeptide.

The protein belongs to the elevenin family. In terms of assembly, monomer. In terms of tissue distribution, expressed by the venom duct.

It localises to the secreted. Its function is as follows. May mimic the function of prey elevenin neuropeptide. In vivo, intracranial injection in mice induces hyperactivity (tested at 5 and 10 nM). The polypeptide is Elevenin-Vc1 (Conus victoriae (Queen Victoria cone)).